The sequence spans 1098 residues: Paired amphipathic helix protein Sin3b (1098 aa).

Over residues 1–25 (MAHAGSGGSAGRGFGGSRWGRSGSG) the composition is skewed to gly residues. The tract at residues 1–26 (MAHAGSGGSAGRGFGGSRWGRSGSGG) is disordered. Residues 1 to 299 (MAHAGSGGSA…VGKYGTLQEF (299 aa)) form an interaction with CRY1 region. 2 consecutive PAH domains span residues 30–100 (LPVH…LPLG) and 145–230 (VPLE…LPEA). The tract at residues 52-98 (PATYNGFLEIMKEFKSQSIDTPGVIRRVSQLFHEHPDLIVGFNAFLP) is interaction with REST. The span at 238–247 (NGSCEMNSGQ) shows a compositional bias: polar residues. The interval 238–274 (NGSCEMNSGQKNEEKSLEHNKKRSRPSLLRPVSAPAK) is disordered. The interaction with NCOR1 stretch occupies residues 275-499 (KKMKLRGTKD…CLGGTSEVIQ (225 aa)). A PAH 3 domain is found at 283-360 (KDLSIAAVGK…AQFKSFLGVK (78 aa)). The segment at 383–550 (ASCKRIGSSY…REAQQGFNKI (168 aa)) is interaction with SUDS3 and HDAC1. Residues 661 to 702 (QQCPGTSDDSADERDRDRDSAEPERRRPTDEKPPADASPEPP) are disordered. 2 positions are modified to phosphoserine: Ser-667 and Ser-670. The segment covering 673 to 694 (ERDRDRDSAEPERRRPTDEKPP) has biased composition (basic and acidic residues).

In terms of assembly, component of the SIN3B complex, which includes SIN3B, HDAC2 or HDAC1, PHF12 and MORF4L1. Interacts with FOXK1/MNF, MXI, MAD, NCOR1 and SAP30. Interaction with SUDS3 enhances the interaction with HDAC1 to form a complex. Interacts with CRY1, HCFC1, MAD3, MAD4, MAEL, REST, RNF220 and SETDB1. Interacts with C6orf89. Interacts with MYT1L. In terms of processing, ubiquitinated by RNF220 that leads to proteasomal degradation.

The protein localises to the nucleus. Functionally, acts as a transcriptional repressor. Interacts with MXI1 to repress MYC responsive genes and antagonize MYC oncogenic activities. Interacts with MAD-MAX heterodimers by binding to MAD. The heterodimer then represses transcription by tethering SIN3B to DNA. Also forms a complex with FOXK1 which represses transcription. With FOXK1, regulates cell cycle progression probably by repressing cell cycle inhibitor genes expression. As part of the SIN3B complex represses transcription and counteracts the histone acetyltransferase activity of EP300 through the recognition H3K27ac marks by PHF12 and the activity of the histone deacetylase HDAC2. SIN3B complex is recruited downstream of the constitutively active genes transcriptional start sites through interaction with histones and mitigates histone acetylation and RNA polymerase II progression within transcribed regions contributing to the regulation of transcription. In Mus musculus (Mouse), this protein is Paired amphipathic helix protein Sin3b (Sin3b).